Reading from the N-terminus, the 191-residue chain is Protein GrpE (191 aa).

2 stretches are compositionally biased toward basic and acidic residues: residues 1-19 (MKDE…EPES) and 29-45 (QQGE…GEIK). A disordered region spans residues 1–45 (MKDEHNQEHDHLSPKEPESYQKAYACKEQQGEEKQEASEKEGEIK).

The protein belongs to the GrpE family. Homodimer.

It localises to the cytoplasm. Its function is as follows. Participates actively in the response to hyperosmotic and heat shock by preventing the aggregation of stress-denatured proteins, in association with DnaK and GrpE. It is the nucleotide exchange factor for DnaK and may function as a thermosensor. Unfolded proteins bind initially to DnaJ; upon interaction with the DnaJ-bound protein, DnaK hydrolyzes its bound ATP, resulting in the formation of a stable complex. GrpE releases ADP from DnaK; ATP binding to DnaK triggers the release of the substrate protein, thus completing the reaction cycle. Several rounds of ATP-dependent interactions between DnaJ, DnaK and GrpE are required for fully efficient folding. In Helicobacter pylori (strain J99 / ATCC 700824) (Campylobacter pylori J99), this protein is Protein GrpE.